We begin with the raw amino-acid sequence, 1233 residues long: Anion exchange protein 3 (1233 aa).

Residues 1 to 11 are compositionally biased toward pro residues; sequence MANGVIPPPGG. Disordered stretches follow at residues 1–320 and 431–500; these read MANG…RRPH and DDKD…DGHR. Residues 1 to 709 lie on the Cytoplasmic side of the membrane; sequence MANGVIPPPG…DLRDALHSQC (709 aa). A compositionally biased stretch (basic and acidic residues) spans 58–73; sequence DPEKPSRSFSERDFAF. Basic residues-rich tracts occupy residues 74–97 and 104–113; these read HRHISHHTHHPLSARLPPPHKLRR and RHTRRKRKKE. Residues 137-153 are compositionally biased toward acidic residues; sequence GEEEEEEEEEGESETEA. S168, S171, S176, and S199 each carry phosphoserine. Residues 201–216 show a composition bias toward low complexity; it reads QRSVSSSSPRARAPRV. Residues 268–290 show a composition bias toward basic and acidic residues; the sequence is DDMKSHRLEDNPGVRRHLVKEPS. R296 is modified (omega-N-methylarginine). Low complexity predominate over residues 437 to 450; it reads SFPRNPSSSSVNSV. The span at 482–500 shows a compositional bias: basic and acidic residues; the sequence is HDPDAKERPLHMPGGDGHR. Helical transmembrane passes span 710–732, 738–775, 795–817, and 827–848; these read VAAVLFIYFAALSPAITFGGLLG, LMGVSELIVSTAVLGVLFSLLGAQPLLVVGFSGPLLVF, VWVGLWLVVFVLALVGAEGTFLV, and IFAFLISLIFIYETFHKLYKVF. The interval 710–1233 is membrane (anion exchange); sequence VAAVLFIYFA…DEYNELHMPV (524 aa). N874 is a glycosylation site (N-linked (GlcNAc...) asparagine). Residues 894-911 form a helical membrane-spanning segment; the sequence is ALLSLILMLGTFLIAFFL. The Cytoplasmic portion of the chain corresponds to 912 to 926; it reads RKFRNSRFLGGKARR. The next 5 helical transmembrane spans lie at 927 to 947, 981 to 1003, 1029 to 1050, 1084 to 1129, and 1156 to 1192; these read IIGDFGIPISILLMVLVDYSI, PFPPWMMVAAAVPALLVLILIFM, LLLIGSLGGLCGLFGLPWLTAA, VTGV…IQLS, and MHLFTCIQLACIALLWVVKSTAASLAFPFLLLLTVPL. C1166 carries S-palmitoyl cysteine lipidation.

It belongs to the anion exchanger (TC 2.A.31) family.

The protein localises to the cell membrane. It carries out the reaction hydrogencarbonate(in) + chloride(out) = hydrogencarbonate(out) + chloride(in). Functionally, sodium-independent anion exchanger which mediates the electroneutral exchange of chloride for bicarbonate ions across the cell membrane. May be involved in the regulation of intracellular pH, and the modulation of cardiac action potential. The chain is Anion exchange protein 3 (SLC4A3) from Oryctolagus cuniculus (Rabbit).